Consider the following 343-residue polypeptide: Heat-inducible transcription repressor HrcA (343 aa).

It belongs to the HrcA family.

Negative regulator of class I heat shock genes (grpE-dnaK-dnaJ and groELS operons). Prevents heat-shock induction of these operons. The polypeptide is Heat-inducible transcription repressor HrcA (Leptospira biflexa serovar Patoc (strain Patoc 1 / Ames)).